The primary structure comprises 268 residues: MNTKEISKVVDLVRESNPLVHNITNVVVTNFTANGLLALGASPVMAYAKEEVAEMASIAGALVLNMGTLRPDEVEAMLLAGKSANTNDVPVLFDPVGAGATSYRTEVARHIPAEIELAIIRGNAAEIANVINEKWEIKGVDAGVGNGNVVSIAKQAADELNTVAVITGKEDVVTDGERTIVIRNGHSILTKVTGTGCLLTSVIGAFVAVEKDYVKAAVAALTFYGVAAELAAAKTVEKGPGSFQIEFLNQLANTTSGDIEKYGKIEVI.

M45 contributes to the substrate binding site. ATP contacts are provided by R121 and T167. G194 contacts substrate.

It belongs to the Thz kinase family. Requires Mg(2+) as cofactor.

The catalysed reaction is 5-(2-hydroxyethyl)-4-methylthiazole + ATP = 4-methyl-5-(2-phosphooxyethyl)-thiazole + ADP + H(+). Its pathway is cofactor biosynthesis; thiamine diphosphate biosynthesis; 4-methyl-5-(2-phosphoethyl)-thiazole from 5-(2-hydroxyethyl)-4-methylthiazole: step 1/1. Catalyzes the phosphorylation of the hydroxyl group of 4-methyl-5-beta-hydroxyethylthiazole (THZ). The polypeptide is Hydroxyethylthiazole kinase (Bacillus thuringiensis subsp. konkukian (strain 97-27)).